The primary structure comprises 838 residues: Lymphoid-specific helicase (838 aa).

Residues 30–115 (MLEEEEQLEA…SLKVKKGKNS (86 aa)) adopt a coiled-coil conformation. Over residues 94-108 (QKKKEKLERKKESLK) the composition is skewed to basic and acidic residues. Positions 94-135 (QKKKEKLERKKESLKVKKGKNSIDASEEKPVMRKKRGREDES) are disordered. Ser-115 carries the phosphoserine modification. The span at 119 to 134 (SEEKPVMRKKRGREDE) shows a compositional bias: basic and acidic residues. The Helicase ATP-binding domain maps to 235–403 (RMLWENGING…WSLLNFLLPD (169 aa)). 248–255 (DEMGLGKT) serves as a coordination point for ATP. The DEAH box motif lies at 354–357 (DEGH). Ser-503 and Ser-515 each carry phosphoserine. The Helicase C-terminal domain occupies 603–767 (ILDRMLPELK…GLNLSKNFLD (165 aa)).

It belongs to the SNF2/RAD54 helicase family. Highly expressed in proliferative tissues such as adult thymus and testis, and expressed at lower levels in uterus, small intestine, colon, and peripheral blood mononuclear cells. Also expressed in neoplastic cell lines including those derived from myeloid and lymphoid leukemias.

Its subcellular location is the nucleus. Plays an essential role in normal development and survival. Involved in regulation of the expansion or survival of lymphoid cells. Required for de novo or maintenance DNA methylation. May control silencing of the imprinted CDKN1C gene through DNA methylation. May play a role in formation and organization of heterochromatin, implying a functional role in the regulation of transcription and mitosis. This chain is Lymphoid-specific helicase, found in Homo sapiens (Human).